The primary structure comprises 199 residues: Cytochrome c oxidase subunit 2 (199 aa).

A helical transmembrane segment spans residues 1–13 (AICSLVLYLLTLM). Residues 14–26 (LMEKLSSNTVDAQ) are Mitochondrial matrix-facing. The chain crosses the membrane as a helical span at residues 27–54 (EVELIWTILPAIVLILLALPSLQILYMM). At 55-199 (DEIDEPDLTL…SSLLSASSSL (145 aa)) the chain is on the mitochondrial intermembrane side. Residues His128, Cys163, Glu165, Cys167, His171, and Met174 each contribute to the Cu cation site. Residue Glu165 coordinates Mg(2+).

The protein belongs to the cytochrome c oxidase subunit 2 family. In terms of assembly, component of the cytochrome c oxidase (complex IV, CIV), a multisubunit enzyme composed of 14 subunits. The complex is composed of a catalytic core of 3 subunits MT-CO1, MT-CO2 and MT-CO3, encoded in the mitochondrial DNA, and 11 supernumerary subunits COX4I, COX5A, COX5B, COX6A, COX6B, COX6C, COX7A, COX7B, COX7C, COX8 and NDUFA4, which are encoded in the nuclear genome. The complex exists as a monomer or a dimer and forms supercomplexes (SCs) in the inner mitochondrial membrane with NADH-ubiquinone oxidoreductase (complex I, CI) and ubiquinol-cytochrome c oxidoreductase (cytochrome b-c1 complex, complex III, CIII), resulting in different assemblies (supercomplex SCI(1)III(2)IV(1) and megacomplex MCI(2)III(2)IV(2)). Found in a complex with TMEM177, COA6, COX18, COX20, SCO1 and SCO2. Interacts with TMEM177 in a COX20-dependent manner. Interacts with COX20. Interacts with COX16. It depends on Cu cation as a cofactor.

Its subcellular location is the mitochondrion inner membrane. It catalyses the reaction 4 Fe(II)-[cytochrome c] + O2 + 8 H(+)(in) = 4 Fe(III)-[cytochrome c] + 2 H2O + 4 H(+)(out). Functionally, component of the cytochrome c oxidase, the last enzyme in the mitochondrial electron transport chain which drives oxidative phosphorylation. The respiratory chain contains 3 multisubunit complexes succinate dehydrogenase (complex II, CII), ubiquinol-cytochrome c oxidoreductase (cytochrome b-c1 complex, complex III, CIII) and cytochrome c oxidase (complex IV, CIV), that cooperate to transfer electrons derived from NADH and succinate to molecular oxygen, creating an electrochemical gradient over the inner membrane that drives transmembrane transport and the ATP synthase. Cytochrome c oxidase is the component of the respiratory chain that catalyzes the reduction of oxygen to water. Electrons originating from reduced cytochrome c in the intermembrane space (IMS) are transferred via the dinuclear copper A center (CU(A)) of subunit 2 and heme A of subunit 1 to the active site in subunit 1, a binuclear center (BNC) formed by heme A3 and copper B (CU(B)). The BNC reduces molecular oxygen to 2 water molecules using 4 electrons from cytochrome c in the IMS and 4 protons from the mitochondrial matrix. This chain is Cytochrome c oxidase subunit 2 (MT-CO2), found in Dromaius novaehollandiae (Emu).